The following is a 504-amino-acid chain: Topoisomerase I damage affected protein 11 (504 aa).

Residues 32–62 (RKTGRKIRSASSNGYRLEHHRTSSAGSMHSQ) are disordered. Residues 179–231 (ALLQSLATKELELLECKQKIEDLKKQTQHEEQNYTRRARELHELKEQVSKHLD) are a coiled coil. Threonine 236 carries the post-translational modification Phosphothreonine. Residues serine 244 and serine 286 each carry the phosphoserine modification. Disordered stretches follow at residues 252 to 306 (LESR…SKQS), 332 to 377 (WDDS…SVSR), and 400 to 504 (DVIT…MTDF). Residues 257-287 (ENAGNSSLPSSVSKPKNMGHQSTNQSRSVSP) are compositionally biased toward polar residues. Over residues 290-301 (IQERRQRDDSSD) the composition is skewed to basic and acidic residues. Polar residues-rich tracts occupy residues 332–359 (WDDSLSGTPEVQEGTPTSNSESSAQQYD) and 368–377 (KSPSQGSVSR). The segment covering 403-421 (TDNRCDPVYKSDRQHEQKK) has biased composition (basic and acidic residues). The segment covering 470-479 (TREKKSKRSS) has biased composition (basic residues). A compositionally biased stretch (polar residues) spans 491-504 (DNSSVKNSVEMTDF).

Belongs to the TDA11 family.

The protein localises to the cytoplasm. In Saccharomyces cerevisiae (strain ATCC 204508 / S288c) (Baker's yeast), this protein is Topoisomerase I damage affected protein 11 (TDA11).